A 520-amino-acid chain; its full sequence is Probable cytochrome P450 4p2 (520 aa).

Residues E325 and C464 each coordinate heme.

The protein belongs to the cytochrome P450 family. Heme is required as a cofactor.

It localises to the endoplasmic reticulum membrane. The protein localises to the microsome membrane. In terms of biological role, may be involved in the metabolism of insect hormones and in the breakdown of synthetic insecticides. In Drosophila melanogaster (Fruit fly), this protein is Probable cytochrome P450 4p2 (Cyp4p2).